Reading from the N-terminus, the 679-residue chain is Protein hook (679 aa).

Positions 1–155 (MSAPKNEMYY…NIMRALQELE (155 aa)) are interaction with microtubules. Positions 6 to 123 (NEMYYSLLEW…RLLQLVLGCA (118 aa)) constitute a Calponin-homology (CH) domain. Coiled coils occupy residues 135–437 (EIMC…LKCG) and 480–574 (QTAL…QEIL).

It belongs to the hook family. As to quaternary structure, homodimer. Interacts with microtubules via its N-terminus.

The protein localises to the cytoplasm. The protein resides in the cytoskeleton. It is found in the endosome. It localises to the synapse. Its function is as follows. Involved in endocytic trafficking by stabilizing organelles of the endocytic pathway. Probably acts as a cytoskeletal linker protein required to tether endosome vesicles to the cytoskeleton. Involved in modulation of endocytosis at stages required for down-regulation of membrane proteins that control synapse size. Not involved in synaptic vesicle recycling. Required in R7 cells for boss endocytosis into multivesicular bodies (MVBs). Has a role in regulating adult longevity. This is Protein hook from Drosophila melanogaster (Fruit fly).